The sequence spans 93 residues: Small ribosomal subunit protein uS19 (93 aa).

The protein belongs to the universal ribosomal protein uS19 family.

Its function is as follows. Protein S19 forms a complex with S13 that binds strongly to the 16S ribosomal RNA. The polypeptide is Small ribosomal subunit protein uS19 (Ruminiclostridium cellulolyticum (strain ATCC 35319 / DSM 5812 / JCM 6584 / H10) (Clostridium cellulolyticum)).